Reading from the N-terminus, the 561-residue chain is Solute carrier family 41 member 2 (561 aa).

The Extracellular segment spans residues 1–150 (MTANTGEPYK…KESSIAMALQ (150 aa)). The chain crosses the membrane as a helical span at residues 151-171 (ILVPFLLAGFGTVSAGMVLDI). Residues 172–183 (VQHWDVFKNLTE) lie on the Cytoplasmic side of the membrane. The chain crosses the membrane as a helical span at residues 184–204 (VFILVPALLGLKGNLEMTLAS). At 205–233 (RLSTAVNVGKMDSPIEKWNLIIGNLALKQ) the chain is on the extracellular side. The helical transmembrane segment at 234–254 (VQATVVGFLAAVFAVILGWIP) threads the bilayer. At 255 to 270 (DGKYQLDHAILLCSSS) the chain is on the cytoplasmic side. A helical membrane pass occupies residues 271–291 (VATAFIASLLQGIIMVGVIVG). Topologically, residues 292–301 (SKKTGINPDN) are extracellular. The chain crosses the membrane as a helical span at residues 302 to 322 (VATPIAASFGDLITLAILAWI). Over 323-333 (SQGLYNCLGSY) the chain is Cytoplasmic. A helical membrane pass occupies residues 334–354 (AFVSPLVGVFFLAMTPIWIVI). At 355–364 (ASKHPATRTV) the chain is on the extracellular side. The chain crosses the membrane as a helical span at residues 365 to 385 (LHSGWEPVITAMLISSIGGLI). Topologically, residues 386 to 394 (LDTTVSDPN) are cytoplasmic. The helical transmembrane segment at 395 to 415 (LVGIVVYTPVINGIGGNLVAI) threads the bilayer. Topologically, residues 416 to 457 (QASRISTYLHLYSIPGELPEDAKGCYHPCRTFCGTGVNNKSA) are extracellular. Residues 458–478 (QVLLSLVIPGHLIFLYTIYLM) form a helical membrane-spanning segment. Residues 479–487 (KSGHTSLTP) lie on the Cytoplasmic side of the membrane. Residues 488-508 (IFVAVYLLAALLQVFALLWIA) form a helical membrane-spanning segment. At 509-531 (DWMVHHIWRKGKDPDSFSIPYLT) the chain is on the extracellular side. Residues 532-552 (ALGDLLGTALLAISFHILWII) traverse the membrane as a helical segment. The Cytoplasmic portion of the chain corresponds to 553 to 561 (GDRDGDVGD).

This sequence belongs to the SLC41A transporter family.

The protein localises to the cell membrane. It catalyses the reaction Mg(2+)(in) = Mg(2+)(out). The catalysed reaction is Mn(2+)(in) = Mn(2+)(out). It carries out the reaction Co(2+)(in) = Co(2+)(out). The enzyme catalyses Ni(2+)(in) = Ni(2+)(out). It catalyses the reaction Fe(2+)(in) = Fe(2+)(out). Its function is as follows. Acts as a plasma-membrane magnesium transporter. Can also mediate the transport of other divalent metal cations in an order of Ba(2+) &gt; Ni(2+) &gt; Co(2+) &gt; Fe(2+) &gt; Mn(2+). In Xenopus laevis (African clawed frog), this protein is Solute carrier family 41 member 2 (slc41a2).